We begin with the raw amino-acid sequence, 287 residues long: MLARFPLYLRLVRMDKPIGSLLLLWPTLNALWIASDGRPRWPLLVIFTLGTLLMRSAGCAMNDYADRDFDRHVKRTADRPLTSGKIRAWEAVAIAVGLSFIAFLLILPLNTLTKELSVVALFVAGSYPFMKRFFAIPQAYLGIAFGFGIPMAFAAVQDTVPMLAWVMLVANIFWSVAYDTEYAMVDRDDDIKIGIRTSALTFGRFDVAAVMACYAATLGIYVWIGVTLGFGLAYWAGWAAAVGCALYHYTLIKDRERMPCFAAFRHNNWLGGVLFAGIAVHYLLAGN.

6 helical membrane passes run 41–61, 89–109, 133–153, 158–178, 202–224, and 266–286; these read WPLL…GCAM, WEAV…ILPL, FFAI…PMAF, DTVP…SVAY, FGRF…YVWI, and HNNW…LLAG.

This sequence belongs to the UbiA prenyltransferase family. Requires Mg(2+) as cofactor.

Its subcellular location is the cell inner membrane. The enzyme catalyses all-trans-octaprenyl diphosphate + 4-hydroxybenzoate = 4-hydroxy-3-(all-trans-octaprenyl)benzoate + diphosphate. The protein operates within cofactor biosynthesis; ubiquinone biosynthesis. Catalyzes the prenylation of para-hydroxybenzoate (PHB) with an all-trans polyprenyl group. Mediates the second step in the final reaction sequence of ubiquinone-8 (UQ-8) biosynthesis, which is the condensation of the polyisoprenoid side chain with PHB, generating the first membrane-bound Q intermediate 3-octaprenyl-4-hydroxybenzoate. The chain is 4-hydroxybenzoate octaprenyltransferase from Burkholderia orbicola (strain MC0-3).